A 500-amino-acid chain; its full sequence is NAD(P)H-quinone oxidoreductase chain 4, chloroplastic (500 aa).

14 helical membrane passes run 4-24 (FPWL…IFLL), 37-57 (LCIC…HFQL), 87-107 (IGPI…AWPV), 111-131 (AQLF…SFSS), 134-154 (LLLF…LLSM), 167-187 (FILY…GIGL), 208-228 (ALEV…LPII), 242-262 (HYST…YGLV), 272-292 (AHCL…IYAA), 305-325 (IAYS…SLSD), 330-350 (GAIL…FLAG), 386-406 (LALP…GIIT), 416-436 (ILIA…SLSM), and 462-482 (LFVS…PDFV).

Belongs to the complex I subunit 4 family.

The protein localises to the plastid. Its subcellular location is the chloroplast thylakoid membrane. The catalysed reaction is a plastoquinone + NADH + (n+1) H(+)(in) = a plastoquinol + NAD(+) + n H(+)(out). The enzyme catalyses a plastoquinone + NADPH + (n+1) H(+)(in) = a plastoquinol + NADP(+) + n H(+)(out). The polypeptide is NAD(P)H-quinone oxidoreductase chain 4, chloroplastic (Oenothera parviflora (Small-flowered evening primrose)).